The primary structure comprises 158 residues: 3-hydroxyacyl-[acyl-carrier-protein] dehydratase FabZ (158 aa).

Residue histidine 61 is part of the active site.

Belongs to the thioester dehydratase family. FabZ subfamily.

It localises to the cytoplasm. It catalyses the reaction a (3R)-hydroxyacyl-[ACP] = a (2E)-enoyl-[ACP] + H2O. Involved in unsaturated fatty acids biosynthesis. Catalyzes the dehydration of short chain beta-hydroxyacyl-ACPs and long chain saturated and unsaturated beta-hydroxyacyl-ACPs. The chain is 3-hydroxyacyl-[acyl-carrier-protein] dehydratase FabZ from Methylobacterium radiotolerans (strain ATCC 27329 / DSM 1819 / JCM 2831 / NBRC 15690 / NCIMB 10815 / 0-1).